Reading from the N-terminus, the 158-residue chain is 6,7-dimethyl-8-ribityllumazine synthase (158 aa).

5-amino-6-(D-ribitylamino)uracil-binding positions include F24, 62–64, and 86–88; these read CFE and AVI. A (2S)-2-hydroxy-3-oxobutyl phosphate-binding site is contributed by 91-92; sequence DT. H94 functions as the Proton donor in the catalytic mechanism. Residue F119 participates in 5-amino-6-(D-ribitylamino)uracil binding. A (2S)-2-hydroxy-3-oxobutyl phosphate-binding site is contributed by R133.

Belongs to the DMRL synthase family.

It carries out the reaction (2S)-2-hydroxy-3-oxobutyl phosphate + 5-amino-6-(D-ribitylamino)uracil = 6,7-dimethyl-8-(1-D-ribityl)lumazine + phosphate + 2 H2O + H(+). Its pathway is cofactor biosynthesis; riboflavin biosynthesis; riboflavin from 2-hydroxy-3-oxobutyl phosphate and 5-amino-6-(D-ribitylamino)uracil: step 1/2. Catalyzes the formation of 6,7-dimethyl-8-ribityllumazine by condensation of 5-amino-6-(D-ribitylamino)uracil with 3,4-dihydroxy-2-butanone 4-phosphate. This is the penultimate step in the biosynthesis of riboflavin. The polypeptide is 6,7-dimethyl-8-ribityllumazine synthase (Picosynechococcus sp. (strain ATCC 27264 / PCC 7002 / PR-6) (Agmenellum quadruplicatum)).